We begin with the raw amino-acid sequence, 183 residues long: Bifunctional protein PyrR (183 aa).

Substrate-binding positions include 46 to 47 (TR), R87, 107 to 115 (DDVIFSGRT), R140, and V164. The PRPP-binding motif lies at 103–115 (VVLVDDVIFSGRT).

The protein belongs to the purine/pyrimidine phosphoribosyltransferase family. PyrR subfamily.

It catalyses the reaction UMP + diphosphate = 5-phospho-alpha-D-ribose 1-diphosphate + uracil. In terms of biological role, regulates the transcription of the pyrimidine nucleotide (pyr) operon in response to exogenous pyrimidines. Its function is as follows. Also displays a weak uracil phosphoribosyltransferase activity which is not physiologically significant. The chain is Bifunctional protein PyrR from Thermosynechococcus vestitus (strain NIES-2133 / IAM M-273 / BP-1).